Consider the following 387-residue polypeptide: N-acetyldiaminopimelate deacetylase (387 aa).

Residue Asp-75 is part of the active site. Catalysis depends on Glu-134, which acts as the Proton acceptor.

The protein belongs to the peptidase M20A family. N-acetyldiaminopimelate deacetylase subfamily.

The enzyme catalyses N-acetyl-(2S,6S)-2,6-diaminopimelate + H2O = (2S,6S)-2,6-diaminopimelate + acetate. It participates in amino-acid biosynthesis; L-lysine biosynthesis via DAP pathway; LL-2,6-diaminopimelate from (S)-tetrahydrodipicolinate (acetylase route): step 3/3. Catalyzes the conversion of N-acetyl-diaminopimelate to diaminopimelate and acetate. The polypeptide is N-acetyldiaminopimelate deacetylase (Leuconostoc citreum (strain KM20)).